Here is a 567-residue protein sequence, read N- to C-terminus: Oxygen-dependent choline dehydrogenase (567 aa).

Residue 4-33 participates in FAD binding; sequence DYIIIGAGSAGNVLAARLTEDADVTVLLLE. H473 serves as the catalytic Proton acceptor.

This sequence belongs to the GMC oxidoreductase family. FAD is required as a cofactor.

The enzyme catalyses choline + A = betaine aldehyde + AH2. The catalysed reaction is betaine aldehyde + NAD(+) + H2O = glycine betaine + NADH + 2 H(+). Its pathway is amine and polyamine biosynthesis; betaine biosynthesis via choline pathway; betaine aldehyde from choline (cytochrome c reductase route): step 1/1. Involved in the biosynthesis of the osmoprotectant glycine betaine. Catalyzes the oxidation of choline to betaine aldehyde and betaine aldehyde to glycine betaine at the same rate. The protein is Oxygen-dependent choline dehydrogenase of Yersinia pseudotuberculosis serotype IB (strain PB1/+).